Reading from the N-terminus, the 124-residue chain is UPF0738 protein ABC2521 (124 aa).

Belongs to the UPF0738 family.

The chain is UPF0738 protein ABC2521 from Shouchella clausii (strain KSM-K16) (Alkalihalobacillus clausii).